Here is a 478-residue protein sequence, read N- to C-terminus: Signal recognition particle receptor FtsY (478 aa).

2 stretches are compositionally biased toward basic and acidic residues: residues 14 to 33 and 45 to 56; these read KDKA…ERGN and AEAHDAVDKDPV. Positions 14–94 are disordered; the sequence is KDKAETEERP…DAPLLPGAEL (81 aa). A compositionally biased stretch (acidic residues) spans 71-86; it reads EAVDVAPAEDDEEEDA. GTP contacts are provided by residues 283-290, 365-369, and 429-432; these read GVNGTGKT, DTAGR, and TKLD.

It belongs to the GTP-binding SRP family. FtsY subfamily. In terms of assembly, part of the signal recognition particle protein translocation system, which is composed of SRP and FtsY. SRP is a ribonucleoprotein composed of Ffh and a 4.5S RNA molecule.

The protein localises to the cell inner membrane. Its subcellular location is the cytoplasm. It catalyses the reaction GTP + H2O = GDP + phosphate + H(+). In terms of biological role, involved in targeting and insertion of nascent membrane proteins into the cytoplasmic membrane. Acts as a receptor for the complex formed by the signal recognition particle (SRP) and the ribosome-nascent chain (RNC). Interaction with SRP-RNC leads to the transfer of the RNC complex to the Sec translocase for insertion into the membrane, the hydrolysis of GTP by both Ffh and FtsY, and the dissociation of the SRP-FtsY complex into the individual components. This is Signal recognition particle receptor FtsY from Agrobacterium fabrum (strain C58 / ATCC 33970) (Agrobacterium tumefaciens (strain C58)).